The following is a 335-amino-acid chain: Putative T-box protein 7 (335 aa).

A DNA-binding region (T-box) is located at residues 73–246 (LWSTFLECGT…NNPFAKGFRN (174 aa)).

The protein resides in the nucleus. This Caenorhabditis elegans protein is Putative T-box protein 7.